The following is a 246-amino-acid chain: 1-(5-phosphoribosyl)-5-[(5-phosphoribosylamino)methylideneamino] imidazole-4-carboxamide isomerase (246 aa).

Aspartate 10 serves as the catalytic Proton acceptor. Aspartate 131 (proton donor) is an active-site residue.

The protein belongs to the HisA/HisF family.

Its subcellular location is the cytoplasm. It catalyses the reaction 1-(5-phospho-beta-D-ribosyl)-5-[(5-phospho-beta-D-ribosylamino)methylideneamino]imidazole-4-carboxamide = 5-[(5-phospho-1-deoxy-D-ribulos-1-ylimino)methylamino]-1-(5-phospho-beta-D-ribosyl)imidazole-4-carboxamide. Its pathway is amino-acid biosynthesis; L-histidine biosynthesis; L-histidine from 5-phospho-alpha-D-ribose 1-diphosphate: step 4/9. This Acidiphilium cryptum (strain JF-5) protein is 1-(5-phosphoribosyl)-5-[(5-phosphoribosylamino)methylideneamino] imidazole-4-carboxamide isomerase.